The following is a 369-amino-acid chain: Galactose-1-phosphate uridylyltransferase (369 aa).

Residues Cys54 and Cys57 each coordinate Zn(2+). Residues Ala63 and 79–80 each bind UDP-alpha-D-glucose; that span reads ND. A Zn(2+)-binding site is contributed by His127. Asn172 serves as a coordination point for UDP-alpha-D-glucose. His183 contacts Zn(2+). Catalysis depends on His185, which acts as the Tele-UMP-histidine intermediate. UDP-alpha-D-glucose is bound at residue Gln187. Positions 201, 300, 317, and 319 each coordinate Fe cation. UDP-alpha-D-glucose contacts are provided by residues 332 to 335 and 337 to 338; these read KFCV and FE.

Belongs to the galactose-1-phosphate uridylyltransferase type 1 family. In terms of assembly, homodimer. The cofactor is Zn(2+).

It carries out the reaction alpha-D-galactose 1-phosphate + UDP-alpha-D-glucose = alpha-D-glucose 1-phosphate + UDP-alpha-D-galactose. It functions in the pathway carbohydrate metabolism; galactose metabolism. This is Galactose-1-phosphate uridylyltransferase (gal7) from Schizosaccharomyces pombe (strain 972 / ATCC 24843) (Fission yeast).